A 554-amino-acid chain; its full sequence is Arginine--tRNA ligase (554 aa).

A 'HIGH' region motif is present at residues 132 to 142; it reads ANPTGPLHIGH.

It belongs to the class-I aminoacyl-tRNA synthetase family. In terms of assembly, monomer.

The protein localises to the cytoplasm. The catalysed reaction is tRNA(Arg) + L-arginine + ATP = L-arginyl-tRNA(Arg) + AMP + diphosphate. The polypeptide is Arginine--tRNA ligase (Pseudarthrobacter chlorophenolicus (strain ATCC 700700 / DSM 12829 / CIP 107037 / JCM 12360 / KCTC 9906 / NCIMB 13794 / A6) (Arthrobacter chlorophenolicus)).